The sequence spans 325 residues: Elongation factor P--(R)-beta-lysine ligase (325 aa).

Position 76 to 78 (serine 76 to glutamate 78) interacts with substrate. Residues arginine 100–glutamate 102 and asparagine 109 contribute to the ATP site. Substrate is bound at residue tyrosine 118. Glutamate 244–leucine 245 is an ATP binding site. Glutamate 251 is a binding site for substrate. Glycine 300 contacts ATP.

The protein belongs to the class-II aminoacyl-tRNA synthetase family. EpmA subfamily. Homodimer.

It catalyses the reaction D-beta-lysine + L-lysyl-[protein] + ATP = N(6)-((3R)-3,6-diaminohexanoyl)-L-lysyl-[protein] + AMP + diphosphate + H(+). In terms of biological role, with EpmB is involved in the beta-lysylation step of the post-translational modification of translation elongation factor P (EF-P) on 'Lys-34'. Catalyzes the ATP-dependent activation of (R)-beta-lysine produced by EpmB, forming a lysyl-adenylate, from which the beta-lysyl moiety is then transferred to the epsilon-amino group of EF-P 'Lys-34'. This Salmonella paratyphi A (strain ATCC 9150 / SARB42) protein is Elongation factor P--(R)-beta-lysine ligase.